The following is a 120-amino-acid chain: Nitrogen regulatory protein GlnK1 (120 aa).

ADP is bound by residues Thr-40, 48-50, Val-75, and 98-101; these read GEQ and GDGR. ATP is bound by residues Thr-40, 48-50, Val-75, and 98-101; these read GEQ and GDGR.

It belongs to the P(II) protein family. As to quaternary structure, homotrimer. Interacts and forms a complex with Amt1.

It is found in the cytoplasm. Its function is as follows. Involved in the regulation of nitrogen metabolism. Regulates the activity of its targets by protein-protein interaction in response to the nitrogen status of the cell. Regulates the activity of the ammonia channel Amt1 via direct interaction. The protein is Nitrogen regulatory protein GlnK1 of Archaeoglobus fulgidus (strain ATCC 49558 / DSM 4304 / JCM 9628 / NBRC 100126 / VC-16).